Here is a 414-residue protein sequence, read N- to C-terminus: Transmembrane protein 184A (414 aa).

The segment at 1 to 32 is disordered; sequence MTDTPGLLGTPLAWTPPARPAGPQMERAGNGS. 7 consecutive transmembrane segments (helical) span residues 48-68, 83-103, 120-140, 177-197, 211-231, 248-268, and 290-310; these read VSGV…YLHL, LLFI…LLGG, FVIY…SAIM, LQFC…QAFG, LYIT…LFLF, FLTI…LAIL, and VAAG…SIAL. 2 disordered regions span residues 323–342 and 364–414; these read TESS…GLKE and YTQQ…AEEL. Residues 379–388 show a composition bias toward polar residues; that stretch reads SVPSPRTPTH.

It belongs to the TMEM184 family. As to expression, expressed in vascular cells (at protein level).

The protein resides in the cell membrane. It localises to the cytoplasm. Its subcellular location is the perinuclear region. It is found in the cytoplasmic vesicle membrane. The protein localises to the early endosome membrane. The protein resides in the endosome. It localises to the cytoplasmic vesicle. Its subcellular location is the secretory vesicle membrane. In terms of biological role, acts as a heparin receptor in vascular cells. May be involved in vesicle transport in exocrine cells and Sertoli cells. In Bos taurus (Bovine), this protein is Transmembrane protein 184A (TMEM184A).